The sequence spans 736 residues: Serine/threonine-protein kinase BRSK2 (736 aa).

The Protein kinase domain maps to 19-270 (YRLEKTLGKG…LEHIQKHIWY (252 aa)). ATP-binding positions include 25-33 (LGKGQTGLV) and lysine 48. The Proton acceptor role is filled by aspartate 141. Threonine 174 is subject to Phosphothreonine; by LKB1. A Phosphothreonine; by PKA modification is found at threonine 260. Serine 294 bears the Phosphoserine mark. Positions 297–339 (DIDPDVLDSMHSLGCFRDRNKLLQDLLSEEENQEKMIYFLLLD) constitute a UBA domain. The span at 345–366 (PSQEDEDLPPRNEIDPPRKRVD) shows a compositional bias: basic and acidic residues. 2 disordered regions span residues 345 to 475 (PSQE…GVPW) and 493 to 513 (HRRK…PESS). Residues serine 367, serine 382, serine 393, serine 412, alanine 416, serine 423, and serine 427 each carry the phosphoserine modification. A compositionally biased stretch (low complexity) spans 410–428 (SRSISGASSGLSTSPLSSP). The segment covering 431–445 (TPHPSPRGSPLPTPK) has biased composition (pro residues). Position 455 is a phosphoserine (serine 455). Threonine 459, threonine 463, and threonine 509 each carry phosphothreonine. Phosphoserine is present on residues serine 512, serine 513, and serine 520. The short motif at 603–605 (KEN) is the KEN box element. Residues 681–736 (KNGQAAQAPSTPAKRSAHGPLGDSAAAGPGPGGDAEYPTGKDTAKMGPPTARREQP) are disordered. A compositionally biased stretch (low complexity) spans 699–708 (GPLGDSAAAG).

It belongs to the protein kinase superfamily. CAMK Ser/Thr protein kinase family. SNF1 subfamily. Interacts with FZR1, a regulatory subunit of the APC ubiquitin ligase complex. Interacts with COPS5. Interacts with PAK1. Requires Mg(2+) as cofactor. In terms of processing, phosphorylated at Thr-174 by STK11/LKB1 in complex with STE20-related adapter-alpha (STRADA) pseudo kinase and CAB39. Not phosphorylated at Thr-174 by CaMKK2. In contrast, it is phosphorylated and activated by CaMKK1. May be inactivated via dephosphorylation of Thr-174 by PP2C. Phosphorylated at Thr-260 by PKA. Phosphorylation at Thr-260 by PKA was not observed in another study, but this may reflect differences in the experimental approach. Phosphorylation at Thr-260 seems to play a role in the regulation of insulin secretion. Post-translationally, polyubiquitinated by the APC complex in conjunction with FZR1, leading to its proteasomal degradation. Targeted for proteasomal degradation by interaction with COPS5. BRSK2 levels change during the cell cycle. BRSK2 levels are low at the G1/S boundary and gradually increase as cells progress into G2 phase. BRSK2 levels decrease rapidly at the end of mitosis. Detected in pancreas islets (at protein level).

It localises to the cytoplasm. Its subcellular location is the cytoskeleton. The protein localises to the microtubule organizing center. It is found in the centrosome. The protein resides in the perinuclear region. It localises to the endoplasmic reticulum. It carries out the reaction L-seryl-[protein] + ATP = O-phospho-L-seryl-[protein] + ADP + H(+). It catalyses the reaction L-threonyl-[protein] + ATP = O-phospho-L-threonyl-[protein] + ADP + H(+). The catalysed reaction is L-seryl-[tau protein] + ATP = O-phospho-L-seryl-[tau protein] + ADP + H(+). The enzyme catalyses L-threonyl-[tau protein] + ATP = O-phospho-L-threonyl-[tau protein] + ADP + H(+). Activated by phosphorylation on Thr-174 by STK11/LKB1. In terms of biological role, serine/threonine-protein kinase that plays a key role in polarization of neurons and axonogenesis, cell cycle progress and insulin secretion. Phosphorylates CDK16, CDC25C, MAPT/TAU, PAK1 and WEE1. Following phosphorylation and activation by STK11/LKB1, acts as a key regulator of polarization of cortical neurons, probably by mediating phosphorylation of microtubule-associated proteins such as MAPT/TAU at 'Thr-529' and 'Ser-579'. Also regulates neuron polarization by mediating phosphorylation of WEE1 at 'Ser-642' in postmitotic neurons, leading to down-regulate WEE1 activity in polarized neurons. Plays a role in the regulation of the mitotic cell cycle progress and the onset of mitosis. Plays a role in the regulation of insulin secretion in response to elevated glucose levels, probably via phosphorylation of CDK16 and PAK1. While BRSK2 phosphorylated at Thr-174 can inhibit insulin secretion, BRSK2 phosphorylated at Thr-260 can promote insulin secretion. Regulates reorganization of the actin cytoskeleton. May play a role in the apoptotic response triggered by endoplasmic reticulum (ER) stress. This Homo sapiens (Human) protein is Serine/threonine-protein kinase BRSK2 (BRSK2).